A 554-amino-acid chain; its full sequence is Glucose-6-phosphate isomerase (554 aa).

E359 (proton donor) is an active-site residue. Active-site residues include H390 and K518.

It belongs to the GPI family.

The protein localises to the cytoplasm. The enzyme catalyses alpha-D-glucose 6-phosphate = beta-D-fructose 6-phosphate. It functions in the pathway carbohydrate biosynthesis; gluconeogenesis. The protein operates within carbohydrate degradation; glycolysis; D-glyceraldehyde 3-phosphate and glycerone phosphate from D-glucose: step 2/4. Its function is as follows. Catalyzes the reversible isomerization of glucose-6-phosphate to fructose-6-phosphate. This chain is Glucose-6-phosphate isomerase, found in Pseudomonas syringae pv. syringae (strain B728a).